The following is a 308-amino-acid chain: Glycine--tRNA ligase alpha subunit (308 aa).

It belongs to the class-II aminoacyl-tRNA synthetase family. Tetramer of two alpha and two beta subunits.

It localises to the cytoplasm. The enzyme catalyses tRNA(Gly) + glycine + ATP = glycyl-tRNA(Gly) + AMP + diphosphate. This is Glycine--tRNA ligase alpha subunit from Brucella canis (strain ATCC 23365 / NCTC 10854 / RM-666).